A 270-amino-acid chain; its full sequence is Formamidopyrimidine-DNA glycosylase (270 aa).

P2 serves as the catalytic Schiff-base intermediate with DNA. The Proton donor role is filled by E3. The active-site Proton donor; for beta-elimination activity is K57. Residues H90, R109, and K150 each coordinate DNA. The segment at 235–269 (LVYGNKDKPCPRCGTKIKSIIIGQRNSFFCPQCQK) adopts an FPG-type zinc-finger fold. R259 serves as the catalytic Proton donor; for delta-elimination activity.

It belongs to the FPG family. In terms of assembly, monomer. Zn(2+) serves as cofactor.

The enzyme catalyses Hydrolysis of DNA containing ring-opened 7-methylguanine residues, releasing 2,6-diamino-4-hydroxy-5-(N-methyl)formamidopyrimidine.. It carries out the reaction 2'-deoxyribonucleotide-(2'-deoxyribose 5'-phosphate)-2'-deoxyribonucleotide-DNA = a 3'-end 2'-deoxyribonucleotide-(2,3-dehydro-2,3-deoxyribose 5'-phosphate)-DNA + a 5'-end 5'-phospho-2'-deoxyribonucleoside-DNA + H(+). In terms of biological role, involved in base excision repair of DNA damaged by oxidation or by mutagenic agents. Acts as a DNA glycosylase that recognizes and removes damaged bases. Has a preference for oxidized purines, such as 7,8-dihydro-8-oxoguanine (8-oxoG). Has AP (apurinic/apyrimidinic) lyase activity and introduces nicks in the DNA strand. Cleaves the DNA backbone by beta-delta elimination to generate a single-strand break at the site of the removed base with both 3'- and 5'-phosphates. This chain is Formamidopyrimidine-DNA glycosylase, found in Histophilus somni (strain 2336) (Haemophilus somnus).